Here is a 270-residue protein sequence, read N- to C-terminus: tRNA pseudouridine synthase A (270 aa).

Residue aspartate 51 is the Nucleophile of the active site. Tyrosine 109 contributes to the substrate binding site.

This sequence belongs to the tRNA pseudouridine synthase TruA family. Homodimer.

It catalyses the reaction uridine(38/39/40) in tRNA = pseudouridine(38/39/40) in tRNA. Its function is as follows. Formation of pseudouridine at positions 38, 39 and 40 in the anticodon stem and loop of transfer RNAs. The sequence is that of tRNA pseudouridine synthase A from Burkholderia lata (strain ATCC 17760 / DSM 23089 / LMG 22485 / NCIMB 9086 / R18194 / 383).